The following is a 153-amino-acid chain: 6,7-dimethyl-8-ribityllumazine synthase (153 aa).

Residues Phe22, 56 to 58, and 80 to 82 each bind 5-amino-6-(D-ribitylamino)uracil; these read AFE and TVI. 85–86 is a (2S)-2-hydroxy-3-oxobutyl phosphate binding site; the sequence is ST. Residue His88 is the Proton donor of the active site. Phe113 serves as a coordination point for 5-amino-6-(D-ribitylamino)uracil. Position 127 (Arg127) interacts with (2S)-2-hydroxy-3-oxobutyl phosphate.

It belongs to the DMRL synthase family. In terms of assembly, forms an icosahedral capsid composed of 60 subunits, arranged as a dodecamer of pentamers.

It carries out the reaction (2S)-2-hydroxy-3-oxobutyl phosphate + 5-amino-6-(D-ribitylamino)uracil = 6,7-dimethyl-8-(1-D-ribityl)lumazine + phosphate + 2 H2O + H(+). Its pathway is cofactor biosynthesis; riboflavin biosynthesis; riboflavin from 2-hydroxy-3-oxobutyl phosphate and 5-amino-6-(D-ribitylamino)uracil: step 1/2. Functionally, catalyzes the formation of 6,7-dimethyl-8-ribityllumazine by condensation of 5-amino-6-(D-ribitylamino)uracil with 3,4-dihydroxy-2-butanone 4-phosphate. This is the penultimate step in the biosynthesis of riboflavin. In Actinobacillus pleuropneumoniae serotype 5b (strain L20), this protein is 6,7-dimethyl-8-ribityllumazine synthase.